A 349-amino-acid polypeptide reads, in one-letter code: Oxygen-dependent coproporphyrinogen-III oxidase (349 aa).

2 disordered regions span residues 1-21 and 37-60; these read MGASENLGQGPPPPHSRKRAR and SLDGGQSFRTDSWERPEGGGGRSK. Ser-105 provides a ligand contact to substrate. 2 residues coordinate a divalent metal cation: His-109 and His-119. The active-site Proton donor is the His-119. 121–123 contacts substrate; it reads NYR. 2 residues coordinate a divalent metal cation: His-153 and His-183. The important for dimerization stretch occupies residues 273 to 308; that stretch reads YAEFNLVWDRGTIFGLQTNGRTESILMSLPPLARWE.

It belongs to the aerobic coproporphyrinogen-III oxidase family. As to quaternary structure, homodimer. The cofactor is a divalent metal cation.

The protein resides in the cytoplasm. The catalysed reaction is coproporphyrinogen III + O2 + 2 H(+) = protoporphyrinogen IX + 2 CO2 + 2 H2O. Its pathway is porphyrin-containing compound metabolism; protoporphyrin-IX biosynthesis; protoporphyrinogen-IX from coproporphyrinogen-III (O2 route): step 1/1. Functionally, involved in the heme and chlorophyll biosynthesis. Catalyzes the aerobic oxidative decarboxylation of propionate groups of rings A and B of coproporphyrinogen-III to yield the vinyl groups in protoporphyrinogen-IX. The sequence is that of Oxygen-dependent coproporphyrinogen-III oxidase from Prochlorococcus marinus (strain MIT 9313).